Reading from the N-terminus, the 116-residue chain is Heme-degrading monooxygenase (116 aa).

The region spanning 2–92 (VIVTNTSKIT…EYILENKISF (91 aa)) is the ABM domain. Position 6 (asparagine 6) interacts with Fe cation. A heme-binding site is contributed by histidine 76.

Belongs to the antibiotic biosynthesis monooxygenase family. Heme-degrading monooxygenase IsdG subfamily. Homodimer.

The protein localises to the cytoplasm. It catalyses the reaction heme b + 3 reduced [NADPH--hemoprotein reductase] + 3 O2 = biliverdin IXalpha + CO + Fe(2+) + 3 oxidized [NADPH--hemoprotein reductase] + 3 H2O + H(+). In terms of biological role, allows bacterial pathogens to use the host heme as an iron source. Catalyzes the oxidative degradation of the heme macrocyclic porphyrin ring to the biliverdin in the presence of a suitable electron donor such as ascorbate or NADPH--cytochrome P450 reductase, with subsequent release of free iron. The sequence is that of Heme-degrading monooxygenase from Halalkalibacterium halodurans (strain ATCC BAA-125 / DSM 18197 / FERM 7344 / JCM 9153 / C-125) (Bacillus halodurans).